Reading from the N-terminus, the 209-residue chain is Na(+)-translocating NADH-quinone reductase subunit D (209 aa).

A run of 5 helical transmembrane segments spans residues 42-62, 72-92, 103-123, 131-151, and 178-198; these read LVMT…ISLI, IIVQ…ILQA, VFVG…AYAM, FMDG…VGFL, and NGLF…IWGL.

This sequence belongs to the NqrDE/RnfAE family. As to quaternary structure, composed of six subunits; NqrA, NqrB, NqrC, NqrD, NqrE and NqrF.

It is found in the cell inner membrane. It carries out the reaction a ubiquinone + n Na(+)(in) + NADH + H(+) = a ubiquinol + n Na(+)(out) + NAD(+). NQR complex catalyzes the reduction of ubiquinone-1 to ubiquinol by two successive reactions, coupled with the transport of Na(+) ions from the cytoplasm to the periplasm. NqrA to NqrE are probably involved in the second step, the conversion of ubisemiquinone to ubiquinol. The chain is Na(+)-translocating NADH-quinone reductase subunit D from Photorhabdus laumondii subsp. laumondii (strain DSM 15139 / CIP 105565 / TT01) (Photorhabdus luminescens subsp. laumondii).